The chain runs to 191 residues: GDP-mannose pyrophosphatase (191 aa).

GDP-alpha-D-mannose is bound by residues Y17, 38–40 (KRE), R67, and 85–87 (AGL). Positions 43-180 (DRGNGATILL…EIRDGKTVLL (138 aa)) constitute a Nudix hydrolase domain. Mg(2+) contacts are provided by A85, E100, and E104. The Nudix box motif lies at 86-106 (GLLDNDEPEVCIRKEAIEETG). GDP-alpha-D-mannose is bound by residues E104, E127, 150–151 (DE), and K176. A Mg(2+)-binding site is contributed by E151.

The protein belongs to the Nudix hydrolase family. NudK subfamily. Homodimer. Requires Mg(2+) as cofactor.

It catalyses the reaction GDP-alpha-D-mannose + H2O = alpha-D-mannose 1-phosphate + GMP + 2 H(+). Nucleoside diphosphate sugar hydrolase that hydrolyzes GDP-mannose as its preferred substrate, yielding GMP and mannose-1-phosphate. This is GDP-mannose pyrophosphatase (nudK) from Salmonella choleraesuis (strain SC-B67).